The primary structure comprises 258 residues: 3-deoxy-manno-octulosonate cytidylyltransferase (258 aa).

It belongs to the KdsB family.

It is found in the cytoplasm. The catalysed reaction is 3-deoxy-alpha-D-manno-oct-2-ulosonate + CTP = CMP-3-deoxy-beta-D-manno-octulosonate + diphosphate. It functions in the pathway nucleotide-sugar biosynthesis; CMP-3-deoxy-D-manno-octulosonate biosynthesis; CMP-3-deoxy-D-manno-octulosonate from 3-deoxy-D-manno-octulosonate and CTP: step 1/1. It participates in bacterial outer membrane biogenesis; lipopolysaccharide biosynthesis. Activates KDO (a required 8-carbon sugar) for incorporation into bacterial lipopolysaccharide in Gram-negative bacteria. In Nitrobacter hamburgensis (strain DSM 10229 / NCIMB 13809 / X14), this protein is 3-deoxy-manno-octulosonate cytidylyltransferase.